A 337-amino-acid chain; its full sequence is Phosphate acyltransferase (337 aa).

This sequence belongs to the PlsX family. As to quaternary structure, homodimer. Probably interacts with PlsY.

It localises to the cytoplasm. The enzyme catalyses a fatty acyl-[ACP] + phosphate = an acyl phosphate + holo-[ACP]. The protein operates within lipid metabolism; phospholipid metabolism. Catalyzes the reversible formation of acyl-phosphate (acyl-PO(4)) from acyl-[acyl-carrier-protein] (acyl-ACP). This enzyme utilizes acyl-ACP as fatty acyl donor, but not acyl-CoA. The chain is Phosphate acyltransferase from Ehrlichia chaffeensis (strain ATCC CRL-10679 / Arkansas).